The following is a 430-amino-acid chain: Adenylosuccinate synthetase (430 aa).

GTP contacts are provided by residues 12–18 (GDEGKGK) and 40–42 (GHT). Residue D13 is the Proton acceptor of the active site. 2 residues coordinate Mg(2+): D13 and G40. IMP-binding positions include 13–16 (DEGK), 38–41 (NAGH), T128, R142, Q223, T238, and R302. H41 serves as the catalytic Proton donor. 298-304 (TTTGRPR) is a binding site for substrate. GTP-binding positions include R304, 330-332 (SID), and 412-414 (SVG).

This sequence belongs to the adenylosuccinate synthetase family. As to quaternary structure, homodimer. Mg(2+) is required as a cofactor.

It is found in the cytoplasm. It catalyses the reaction IMP + L-aspartate + GTP = N(6)-(1,2-dicarboxyethyl)-AMP + GDP + phosphate + 2 H(+). Its pathway is purine metabolism; AMP biosynthesis via de novo pathway; AMP from IMP: step 1/2. Plays an important role in the de novo pathway of purine nucleotide biosynthesis. Catalyzes the first committed step in the biosynthesis of AMP from IMP. This is Adenylosuccinate synthetase from Streptococcus pyogenes serotype M3 (strain ATCC BAA-595 / MGAS315).